The chain runs to 248 residues: Leucyl/phenylalanyl-tRNA--protein transferase (248 aa).

This sequence belongs to the L/F-transferase family.

It is found in the cytoplasm. The catalysed reaction is N-terminal L-lysyl-[protein] + L-leucyl-tRNA(Leu) = N-terminal L-leucyl-L-lysyl-[protein] + tRNA(Leu) + H(+). The enzyme catalyses N-terminal L-arginyl-[protein] + L-leucyl-tRNA(Leu) = N-terminal L-leucyl-L-arginyl-[protein] + tRNA(Leu) + H(+). It catalyses the reaction L-phenylalanyl-tRNA(Phe) + an N-terminal L-alpha-aminoacyl-[protein] = an N-terminal L-phenylalanyl-L-alpha-aminoacyl-[protein] + tRNA(Phe). Functionally, functions in the N-end rule pathway of protein degradation where it conjugates Leu, Phe and, less efficiently, Met from aminoacyl-tRNAs to the N-termini of proteins containing an N-terminal arginine or lysine. In Rhizorhabdus wittichii (strain DSM 6014 / CCUG 31198 / JCM 15750 / NBRC 105917 / EY 4224 / RW1) (Sphingomonas wittichii), this protein is Leucyl/phenylalanyl-tRNA--protein transferase.